Here is a 181-residue protein sequence, read N- to C-terminus: Histone deacetylase complex subunit SAP30L-B (181 aa).

Disulfide bonds link cysteine 26-cysteine 27 and cysteine 35-cysteine 71. Residues 26–74 form an Atypical zinc finger; sequence CCLIDGGERCPRPAGNASFSKRVQKSISQKKLKLDIDKSVRHLYICDFH. Residues 82–103 are disordered; the sequence is RNKRKRKTSDDGGDSPEHETDV. The Nuclear localization signal (NLS) motif lies at 83–88; sequence NKRKRK. An important for DNA and phosphoinositide binding region spans residues 85-87; sequence RKR.

This sequence belongs to the SAP30 family. Interacts with components of the histone deacetylase complex sin3a, hdac1 and hdac2. Binds histones and nucleosomes.

The protein resides in the nucleus. It localises to the nucleolus. Its function is as follows. Functions as a transcription repressor, probably via its interaction with histone deacetylase complexes. Involved in the functional recruitment of the class 1 Sin3-histone deacetylase complex (HDAC) to the nucleolus. Binds DNA, apparently without sequence-specificity, and bends bound double-stranded DNA. Binds phosphoinositol phosphates (phosphoinositol 3-phosphate, phosphoinositol 4-phosphate and phosphoinositol 5-phosphate) via the same basic sequence motif that mediates DNA binding and nuclear import. The polypeptide is Histone deacetylase complex subunit SAP30L-B (sap30l-b) (Xenopus laevis (African clawed frog)).